The chain runs to 909 residues: Protein translocase subunit SecA (909 aa).

ATP contacts are provided by residues Q87, 105 to 109, and D507; that span reads GEGKT. Disordered stretches follow at residues 567-586 and 859-909; these read RRIDNQLRGRSGRQGDPGSS and YSEA…GKLD. Residues 865–889 show a composition bias toward basic and acidic residues; sequence EHQSVTEGHEAKQQPFVRKSDKIGR. 4 residues coordinate Zn(2+): C893, C895, C904, and H905. Basic residues predominate over residues 899–909; the sequence is RKYKQCHGKLD.

This sequence belongs to the SecA family. In terms of assembly, monomer and homodimer. Part of the essential Sec protein translocation apparatus which comprises SecA, SecYEG and auxiliary proteins SecDF-YajC and YidC. The cofactor is Zn(2+).

The protein localises to the cell inner membrane. The protein resides in the cytoplasm. It catalyses the reaction ATP + H2O + cellular proteinSide 1 = ADP + phosphate + cellular proteinSide 2.. Its function is as follows. Part of the Sec protein translocase complex. Interacts with the SecYEG preprotein conducting channel. Has a central role in coupling the hydrolysis of ATP to the transfer of proteins into and across the cell membrane, serving both as a receptor for the preprotein-SecB complex and as an ATP-driven molecular motor driving the stepwise translocation of polypeptide chains across the membrane. The polypeptide is Protein translocase subunit SecA (Nitrosomonas eutropha (strain DSM 101675 / C91 / Nm57)).